Here is a 498-residue protein sequence, read N- to C-terminus: ATP synthase subunit beta, chloroplastic (498 aa).

172 to 179 contacts ATP; it reads GGAGVGKT.

The protein belongs to the ATPase alpha/beta chains family. As to quaternary structure, F-type ATPases have 2 components, CF(1) - the catalytic core - and CF(0) - the membrane proton channel. CF(1) has five subunits: alpha(3), beta(3), gamma(1), delta(1), epsilon(1). CF(0) has four main subunits: a(1), b(1), b'(1) and c(9-12).

The protein resides in the plastid. It localises to the chloroplast thylakoid membrane. It catalyses the reaction ATP + H2O + 4 H(+)(in) = ADP + phosphate + 5 H(+)(out). Its function is as follows. Produces ATP from ADP in the presence of a proton gradient across the membrane. The catalytic sites are hosted primarily by the beta subunits. The protein is ATP synthase subunit beta, chloroplastic of Licuala grandis (Ruffled fan palm).